A 172-amino-acid polypeptide reads, in one-letter code: Major exported protein (172 aa).

Belongs to the hcp1 family.

The protein resides in the secreted. In Pseudomonas aeruginosa (strain ATCC 15692 / DSM 22644 / CIP 104116 / JCM 14847 / LMG 12228 / 1C / PRS 101 / PAO1), this protein is Major exported protein (hcpA).